The sequence spans 955 residues: UPF0182 protein syc2310_c (955 aa).

9 helical membrane-spanning segments follow: residues 12–32 (IAAIALGLSLLTRIHIETLWF), 45–65 (LAVQALLFSVVGIAITGLIGG), 85–105 (LQLGGLLTVLTLLWIALLALT), 141–161 (GSWPLGMGLLLGVGSLVLFLW), 163–183 (PWPLLIGLSSLTSLAIALLTS), 224–244 (FDLWIGLAFSFCAVLAVYYLA), 263–283 (HLVRLAIAIALFLAGHCWLAQ), 306–326 (LPLLQVWMILFGIAAIALFWQ), and 343–363 (AAIASVLIWVTLPAIVQQLVV).

This sequence belongs to the UPF0182 family.

It is found in the cell membrane. The protein is UPF0182 protein syc2310_c of Synechococcus sp. (strain ATCC 27144 / PCC 6301 / SAUG 1402/1) (Anacystis nidulans).